Here is a 459-residue protein sequence, read N- to C-terminus: Ribulose bisphosphate carboxylase large chain (459 aa).

Lys4 carries the N6,N6,N6-trimethyllysine modification. Substrate-binding residues include Asn113 and Thr163. The active-site Proton acceptor is the Lys165. Lys167 serves as a coordination point for substrate. 3 residues coordinate Mg(2+): Lys191, Asp193, and Glu194. N6-carboxylysine is present on Lys191. His284 functions as the Proton acceptor in the catalytic mechanism. Substrate contacts are provided by Arg285, His317, and Ser369.

It belongs to the RuBisCO large chain family. Type I subfamily. As to quaternary structure, heterohexadecamer of 8 large chains and 8 small chains; disulfide-linked. The disulfide link is formed within the large subunit homodimers. Mg(2+) serves as cofactor. Post-translationally, the disulfide bond which can form in the large chain dimeric partners within the hexadecamer appears to be associated with oxidative stress and protein turnover.

Its subcellular location is the plastid. It is found in the chloroplast. The catalysed reaction is 2 (2R)-3-phosphoglycerate + 2 H(+) = D-ribulose 1,5-bisphosphate + CO2 + H2O. It carries out the reaction D-ribulose 1,5-bisphosphate + O2 = 2-phosphoglycolate + (2R)-3-phosphoglycerate + 2 H(+). Its function is as follows. RuBisCO catalyzes two reactions: the carboxylation of D-ribulose 1,5-bisphosphate, the primary event in carbon dioxide fixation, as well as the oxidative fragmentation of the pentose substrate in the photorespiration process. Both reactions occur simultaneously and in competition at the same active site. The sequence is that of Ribulose bisphosphate carboxylase large chain from Micranthes integrifolia (Wholeleaf saxifrage).